Here is a 1705-residue protein sequence, read N- to C-terminus: ALK tyrosine kinase receptor (1705 aa).

Positions 1 to 21 (MIARILYFFLWSAAFLPELQC) are cleaved as a signal peptide. The Extracellular portion of the chain corresponds to 22–1035 (ASQRTADALT…SLSHLALGLS (1014 aa)). N-linked (GlcNAc...) asparagine glycans are attached at residues Asn40 and Asn48. Residues 54–76 (RIKRKTLSVDFAVPSLLRYYLAL) are heparin-binding region. Residues Asn124, Asn259, Asn334, Asn434, Asn442, Asn458, Asn484, Asn578, Asn590, and Asn635 are each glycosylated (N-linked (GlcNAc...) asparagine). Residues 486 to 644 (SYCSFGREDC…NFTLSMECFL (159 aa)) form the MAM domain. Cys694 and Cys707 are joined by a disulfide. Asn717 carries an N-linked (GlcNAc...) asparagine glycan. The cysteines at positions 788 and 799 are disulfide-linked. 2 N-linked (GlcNAc...) asparagine glycosylation sites follow: Asn808 and Asn881. Residues 842–892 (GGGRGYSSQSETPEEVMDRDPSIPGRNGKSGTAGGGGGWNDSAPVPQGGRP) form a disordered region. A disulfide bond links Cys903 and Cys921. Asn979 is a glycosylation site (N-linked (GlcNAc...) asparagine). 2 disulfide bridges follow: Cys980–Cys988 and Cys983–Cys997. The tract at residues 980-1016 (CSHCESGDCHETSEGMVCYCDEELTLAPDGVSCINST) is EGF-like. N-linked (GlcNAc...) asparagine glycosylation is present at Asn1014. Residues 1036–1056 (VGTSALIAALLLAVSGVMIMY) form a helical membrane-spanning segment. At 1057-1705 (RRKHTELQSI…KMEGHNATVL (649 aa)) the chain is on the cytoplasmic side. Residues 1113-1389 (ISLTRGLGHG…IDYCLQDPDV (277 aa)) form the Protein kinase domain. Residues 1119 to 1127 (LGHGAFGEV) and Lys1147 contribute to the ATP site. Asp1246 functions as the Proton acceptor in the catalytic mechanism. Disordered regions lie at residues 1395 to 1499 (PVEY…GHVN), 1505 to 1524 (AHSS…WNPT), 1532 to 1557 (QQQK…GQEQ), 1588 to 1613 (QQQQ…PAPT), and 1646 to 1681 (GLPM…DSRP). The segment covering 1484-1493 (KPSSTTSNAQ) has biased composition (polar residues). Low complexity-rich tracts occupy residues 1532–1544 (QQQK…AQRQ) and 1588–1602 (QQQQ…LCRP). Residues 1603–1613 (LLPPPPPPAPT) are compositionally biased toward pro residues.

The protein belongs to the protein kinase superfamily. Tyr protein kinase family. Insulin receptor subfamily. Homodimer; homodimerizes upon binding to alkal ligands (alkal1, alkal2a or alkal2b). Highly expressed in the developing central nervous system: highly expressed in brain, with much lower expression in heart, caudal fin and testis.

The protein resides in the cell membrane. The catalysed reaction is L-tyrosyl-[protein] + ATP = O-phospho-L-tyrosyl-[protein] + ADP + H(+). With respect to regulation, inhibited by ALK inhibitor TAE684. In terms of biological role, receptor tyrosine kinase required for neurogenesis in the developing central nervous system. Following activation by alkal ligands (alkal1, alkal2a or alkal2b) at the cell surface, transduces an extracellular signal into an intracellular response. Ligand-binding to the extracellular domain induces tyrosine kinase activation, resulting in the activation of the mitogen-activated protein kinase (MAPK) pathway. Phosphorylates almost exclusively at the first tyrosine of the Y-x-x-x-Y-Y motif. In Danio rerio (Zebrafish), this protein is ALK tyrosine kinase receptor.